The primary structure comprises 310 residues: Succinate dehydrogenase assembly factor 2, mitochondrial (310 aa).

Basic and acidic residues predominate over residues 35-48 (LKDGSDEASPEVKA). The disordered stretch occupies residues 35 to 67 (LKDGSDEASPEVKAHRANQANKAPNQFVPNTTS). The segment covering 52-67 (NQANKAPNQFVPNTTS) has biased composition (polar residues).

It belongs to the SDHAF2 family. In terms of assembly, interacts with the flavoprotein subunit within the SDH catalytic dimer.

The protein resides in the mitochondrion matrix. Functionally, plays an essential role in the assembly of succinate dehydrogenase (SDH), an enzyme complex (also referred to as respiratory complex II) that is a component of both the tricarboxylic acid (TCA) cycle and the mitochondrial electron transport chain, and which couples the oxidation of succinate to fumarate with the reduction of ubiquinone (coenzyme Q) to ubiquinol. Required for flavinylation (covalent attachment of FAD) of the flavoprotein subunit of the SDH catalytic dimer. This is Succinate dehydrogenase assembly factor 2, mitochondrial from Penicillium rubens (strain ATCC 28089 / DSM 1075 / NRRL 1951 / Wisconsin 54-1255) (Penicillium chrysogenum).